The primary structure comprises 523 residues: NAD(P)H-quinone oxidoreductase subunit 2 (523 aa).

A run of 14 helical transmembrane segments spans residues 29–49, 57–77, 94–114, 123–143, 147–167, 182–202, 221–243, 255–275, 291–311, 317–337, 345–365, 389–409, 424–444, and 477–497; these read AIAPEGAVLVAMLATLLVDLA, WVPPICYAGLGTALVLLAQQW, LAIAFRAVVALSTLLSLLISW, PIGEYAAILLAATLGAMLLCG, LVSVFVSLETLSVASYLLAGY, LLVGSAAAAVFLYGASLLYGL, PLAALSLVFVLATVAFKIAAVPF, PTPVVAFLSVGSKAAGFALAL, LLFTVLAVLSMTLGNVVALAQ, MLAYSSIGQAGFVMIGLVCGT, VLYMAAYLFMNLGAFACIILF, LGLSLCLLSLGGIPPMLGFFG, LLVVVGLVTSVVSIYYYISVI, and IALVGCVVVTAVGGILSNPLF.

The protein belongs to the complex I subunit 2 family. In terms of assembly, NDH-1 can be composed of about 15 different subunits; different subcomplexes with different compositions have been identified which probably have different functions.

The protein localises to the cellular thylakoid membrane. It catalyses the reaction a plastoquinone + NADH + (n+1) H(+)(in) = a plastoquinol + NAD(+) + n H(+)(out). The catalysed reaction is a plastoquinone + NADPH + (n+1) H(+)(in) = a plastoquinol + NADP(+) + n H(+)(out). Functionally, NDH-1 shuttles electrons from an unknown electron donor, via FMN and iron-sulfur (Fe-S) centers, to quinones in the respiratory and/or the photosynthetic chain. The immediate electron acceptor for the enzyme in this species is believed to be plastoquinone. Couples the redox reaction to proton translocation, and thus conserves the redox energy in a proton gradient. Cyanobacterial NDH-1 also plays a role in inorganic carbon-concentration. The protein is NAD(P)H-quinone oxidoreductase subunit 2 of Prochlorococcus marinus (strain MIT 9303).